We begin with the raw amino-acid sequence, 98 residues long: uncharacterized protein (98 aa).

An N-terminal signal peptide occupies residues 1–19; sequence MTERRRALSLAAVVDSINL. Residues 40–98 form a disordered region; the sequence is PPGGSFSGIKRESRRKRPSRNEIYGGGVLEQEVRMRRWSKTASPPVSLHHRPLGPARKP. Basic residues predominate over residues 87–98; the sequence is LHHRPLGPARKP.

This is an uncharacterized protein from Homo sapiens (Human).